A 35-amino-acid chain; its full sequence is Photosystem II reaction center protein T (35 aa).

Residues 3 to 23 traverse the membrane as a helical segment; the sequence is ALVYTFLLVSTLGILFFAIFF.

It belongs to the PsbT family. PSII is composed of 1 copy each of membrane proteins PsbA, PsbB, PsbC, PsbD, PsbE, PsbF, PsbH, PsbI, PsbJ, PsbK, PsbL, PsbM, PsbT, PsbY, PsbZ, Psb30/Ycf12, at least 3 peripheral proteins of the oxygen-evolving complex and a large number of cofactors. It forms dimeric complexes.

The protein localises to the plastid. The protein resides in the chloroplast thylakoid membrane. In terms of biological role, found at the monomer-monomer interface of the photosystem II (PS II) dimer, plays a role in assembly and dimerization of PSII. PSII is a light-driven water plastoquinone oxidoreductase, using light energy to abstract electrons from H(2)O, generating a proton gradient subsequently used for ATP formation. The chain is Photosystem II reaction center protein T from Gnetum gnemon (Spanish joint-fir).